We begin with the raw amino-acid sequence, 2920 residues long: Cadherin-related hmr-1 (2920 aa).

The first 19 residues, 1–19, serve as a signal peptide directing secretion; the sequence is MSWNILLILLISNLDEVLA. Residues 20–2779 lie on the Extracellular side of the membrane; the sequence is KTLLKLPSNA…AVSKLGISSP (2760 aa). N-linked (GlcNAc...) asparagine glycans are attached at residues Asn-72, Asn-243, Asn-253, Asn-339, and Asn-508. Cadherin domains lie at 322-422, 425-530, 531-642, 643-747, 749-865, 871-979, 980-1093, 1097-1211, 1212-1335, 1336-1436, 1438-1546, 1548-1661, 1662-1772, and 1772-1874; these read SSRS…PPSF, SPLP…PPQF, AKQE…VPTF, TRPL…SAVF, PTSQ…KPEF, YSDI…SPQF, ERPS…APKW, PDCK…VPQF, TVDL…APSF, EEQK…APQF, QQKY…SPIF, ERLF…APFF, EKTR…APHI, and IHGA…EPYT. N-linked (GlcNAc...) asparagine glycans are attached at residues Asn-658, Asn-685, Asn-715, and Asn-826. Asn-1177 carries an N-linked (GlcNAc...) asparagine glycan. An N-linked (GlcNAc...) asparagine glycan is attached at Asn-1417. Asn-1646 carries N-linked (GlcNAc...) asparagine glycosylation. Asn-1935, Asn-2224, and Asn-2232 each carry an N-linked (GlcNAc...) asparagine glycan. The EGF-like 1 domain occupies 2246–2283; the sequence is APPACQHSLCHNDGVCHNTNPGFFCECRNDGLKGARCQ. Intrachain disulfides connect Cys-2250-Cys-2261, Cys-2255-Cys-2270, and Cys-2272-Cys-2282. The Laminin G-like domain maps to 2284-2478; it reads GTTRSFGGNG…AFEQNSEKGC (195 aa). N-linked (GlcNAc...) asparagine glycans are attached at residues Asn-2307 and Asn-2332. Cystine bridges form between Cys-2452–Cys-2478, Cys-2501–Cys-2515, and Cys-2517–Cys-2526. Residues 2492-2527 enclose the EGF-like 2 domain; that stretch reads SLNHCIHGDCFADVQGSGAMVAKCVCDPGWGGARCE. An N-linked (GlcNAc...) asparagine glycan is attached at Asn-2623. A helical transmembrane segment spans residues 2780–2800; sequence AIILILVSLALLILLVMMMVV. The Cytoplasmic segment spans residues 2801–2920; sequence YTRRSPGAFE…VTLESIESAQ (120 aa). Ser-2839 is subject to Phosphoserine. A disordered region spans residues 2858-2891; it reads IGGHPPHYPPRGMAPPKDDHELNSKIKDLETDQN. Positions 2873–2887 are enriched in basic and acidic residues; it reads PKDDHELNSKIKDLE. Ser-2909 is subject to Phosphoserine. At Thr-2912 the chain carries Phosphothreonine. Residues Ser-2915 and Ser-2918 each carry the phosphoserine modification.

In terms of assembly, monomer in solution. Isoform a is a component of a core catenin-cadherin complex consisting of hmr-1, hmp-1 and hmp-2; the complex localizes to adherens junctions. Isoform a interacts with hmp-2; the interaction is direct. Isoform a interacts (via intracellular domain) with jac-1. Phosphorylation at T-2912 increases the binding affinity for hmp-2. In terms of processing, sumoylated. Sumoylation prevents accumulation at adherens junctions and decreases the binding affinity for hmp-2. As to expression, expressed in epidermal cells (at protein level). In terms of tissue distribution, neuron-specific.

It is found in the cell membrane. The protein localises to the cell junction. It localises to the adherens junction. Its subcellular location is the cell projection. The protein resides in the dendrite. In terms of biological role, cadherins are calcium-dependent cell adhesion proteins. They preferentially interact with themselves in a homophilic manner in connecting cells; cadherins may thus contribute to the sorting of heterogeneous cell types. Required for adherens junction assembly and connecting adherens junctions to the cytoskeleton. Its function is as follows. Isoform a is required for cell migration during body enclosure and cell shape changes during body elongation. Required for proper localization of other junctional components, such as hmp-1, hmp-2, jac-1 and pac-1. Recruitment of pac-1 is required to establish cell polarity, independent of its role in cell adhesion. Required for primodial germ cell ingression and adherence to endodermal cells during gastrulation. Isoform b is involved in axonal guidance in a subset of motor neurons. The protein is Cadherin-related hmr-1 of Caenorhabditis elegans.